Consider the following 180-residue polypeptide: Endoribonuclease YbeY (180 aa).

3 residues coordinate Zn(2+): histidine 149, histidine 153, and histidine 159.

The protein belongs to the endoribonuclease YbeY family. The cofactor is Zn(2+).

The protein localises to the cytoplasm. In terms of biological role, single strand-specific metallo-endoribonuclease involved in late-stage 70S ribosome quality control and in maturation of the 3' terminus of the 16S rRNA. This Prochlorococcus marinus subsp. pastoris (strain CCMP1986 / NIES-2087 / MED4) protein is Endoribonuclease YbeY.